Consider the following 286-residue polypeptide: 4-diphosphocytidyl-2-C-methyl-D-erythritol kinase (286 aa).

Lys-11 is an active-site residue. Position 93–103 (93–103 (PFGAGLGGGSS)) interacts with ATP. Asp-135 is an active-site residue.

This sequence belongs to the GHMP kinase family. IspE subfamily.

It catalyses the reaction 4-CDP-2-C-methyl-D-erythritol + ATP = 4-CDP-2-C-methyl-D-erythritol 2-phosphate + ADP + H(+). The protein operates within isoprenoid biosynthesis; isopentenyl diphosphate biosynthesis via DXP pathway; isopentenyl diphosphate from 1-deoxy-D-xylulose 5-phosphate: step 3/6. Functionally, catalyzes the phosphorylation of the position 2 hydroxy group of 4-diphosphocytidyl-2C-methyl-D-erythritol. This Chlorobaculum tepidum (strain ATCC 49652 / DSM 12025 / NBRC 103806 / TLS) (Chlorobium tepidum) protein is 4-diphosphocytidyl-2-C-methyl-D-erythritol kinase.